Consider the following 34-residue polypeptide: Papillosin (34 aa).

In terms of biological role, has strong antibacterial activity against the Gram-positive bacteria M.luteus, S.aureus, B.megaterium, A.viridans and E.faecalis, and against the Gram-negative bacteria K.pneumoniae, E.coli DH5alpha, S.typhimurium, P.aeruginosa and E.aerogenes. Lacks hemolytic activity against sheep erythrocytes. The sequence is that of Papillosin from Halocynthia papillosa (Red sea-squirt).